A 540-amino-acid chain; its full sequence is uncharacterized protein (540 aa).

This is an uncharacterized protein from Escherichia coli (strain K12).